Reading from the N-terminus, the 65-residue chain is Beta-defensin 17 (65 aa).

Residues 1-19 form the signal peptide; that stretch reads MKFHLLFFILLFSITILTG. Disulfide bonds link Cys35–Cys63, Cys42–Cys56, and Cys46–Cys64.

It belongs to the beta-defensin family.

The protein resides in the secreted. Has antibacterial activity. The sequence is that of Beta-defensin 17 (Defb17) from Rattus norvegicus (Rat).